The sequence spans 177 residues: Large ribosomal subunit protein uL6 (177 aa).

Belongs to the universal ribosomal protein uL6 family. Part of the 50S ribosomal subunit.

Its function is as follows. This protein binds to the 23S rRNA, and is important in its secondary structure. It is located near the subunit interface in the base of the L7/L12 stalk, and near the tRNA binding site of the peptidyltransferase center. This chain is Large ribosomal subunit protein uL6, found in Vibrio cholerae serotype O1 (strain ATCC 39315 / El Tor Inaba N16961).